Reading from the N-terminus, the 309-residue chain is Large ribosomal subunit protein uL22m (309 aa).

Residues 1 to 25 constitute a mitochondrion transit peptide; sequence MNFHTARISQVGVISRALLSSVSRR. Residues 40 to 63 form a disordered region; it reads SLFGSITENKPKEGKNRGDEDAGS. Residues 48 to 59 show a composition bias toward basic and acidic residues; the sequence is NKPKEGKNRGDE.

Belongs to the universal ribosomal protein uL22 family. Component of the mitochondrial large ribosomal subunit (mt-LSU). Mature yeast 74S mitochondrial ribosomes consist of a small (37S) and a large (54S) subunit. The 37S small subunit contains a 15S ribosomal RNA (15S mt-rRNA) and 34 different proteins. The 54S large subunit contains a 21S rRNA (21S mt-rRNA) and 46 different proteins. uL22m forms the wall of the exit tunnel.

It localises to the mitochondrion. Component of the mitochondrial ribosome (mitoribosome), a dedicated translation machinery responsible for the synthesis of mitochondrial genome-encoded proteins, including at least some of the essential transmembrane subunits of the mitochondrial respiratory chain. The mitoribosomes are attached to the mitochondrial inner membrane and translation products are cotranslationally integrated into the membrane. In Saccharomyces cerevisiae (strain ATCC 204508 / S288c) (Baker's yeast), this protein is Large ribosomal subunit protein uL22m (MRPL22).